A 368-amino-acid chain; its full sequence is Quinolinate synthase (368 aa).

His-46 and Ser-63 together coordinate iminosuccinate. Position 110 (Cys-110) interacts with [4Fe-4S] cluster. Residues 141–143 and Ser-162 each bind iminosuccinate; that span reads YVN. Cys-230 contacts [4Fe-4S] cluster. Residues 256–258 and Thr-273 each bind iminosuccinate; that span reads HPE. Cys-320 is a [4Fe-4S] cluster binding site.

This sequence belongs to the quinolinate synthase family. Type 3 subfamily. The cofactor is [4Fe-4S] cluster.

Its subcellular location is the cytoplasm. It carries out the reaction iminosuccinate + dihydroxyacetone phosphate = quinolinate + phosphate + 2 H2O + H(+). It functions in the pathway cofactor biosynthesis; NAD(+) biosynthesis; quinolinate from iminoaspartate: step 1/1. Catalyzes the condensation of iminoaspartate with dihydroxyacetone phosphate to form quinolinate. The chain is Quinolinate synthase from Bacillus cytotoxicus (strain DSM 22905 / CIP 110041 / 391-98 / NVH 391-98).